The chain runs to 81 residues: ATP synthase subunit c, chloroplastic (81 aa).

2 consecutive transmembrane segments (helical) span residues 3-23 (PLIA…ASIG) and 57-77 (LAFM…LLFA).

The protein belongs to the ATPase C chain family. In terms of assembly, F-type ATPases have 2 components, F(1) - the catalytic core - and F(0) - the membrane proton channel. F(1) has five subunits: alpha(3), beta(3), gamma(1), delta(1), epsilon(1). F(0) has four main subunits: a(1), b(1), b'(1) and c(10-14). The alpha and beta chains form an alternating ring which encloses part of the gamma chain. F(1) is attached to F(0) by a central stalk formed by the gamma and epsilon chains, while a peripheral stalk is formed by the delta, b and b' chains.

It is found in the plastid. Its subcellular location is the chloroplast thylakoid membrane. In terms of biological role, f(1)F(0) ATP synthase produces ATP from ADP in the presence of a proton or sodium gradient. F-type ATPases consist of two structural domains, F(1) containing the extramembraneous catalytic core and F(0) containing the membrane proton channel, linked together by a central stalk and a peripheral stalk. During catalysis, ATP synthesis in the catalytic domain of F(1) is coupled via a rotary mechanism of the central stalk subunits to proton translocation. Functionally, key component of the F(0) channel; it plays a direct role in translocation across the membrane. A homomeric c-ring of between 10-14 subunits forms the central stalk rotor element with the F(1) delta and epsilon subunits. In Chaetosphaeridium globosum (Charophycean green alga), this protein is ATP synthase subunit c, chloroplastic.